The sequence spans 53 residues: Rubredoxin 3 (53 aa).

The region spanning 1-53 (MQKWVCVPCGYEYDPADGDPENGIEPGTAFEDLPEDWVCPVCGVDKSFFEPVS) is the Rubredoxin-like domain. Fe cation-binding residues include C6, C9, C39, and C42.

This sequence belongs to the rubredoxin family. In terms of assembly, monomer. The cofactor is Fe(3+).

Functions as an electron acceptor for pyruvate ferredoxin oxidoreductase (PFOR). The protein is Rubredoxin 3 (rub3) of Chlorobaculum tepidum (strain ATCC 49652 / DSM 12025 / NBRC 103806 / TLS) (Chlorobium tepidum).